Here is a 188-residue protein sequence, read N- to C-terminus: FMN-dependent NADPH-azoreductase (188 aa).

This sequence belongs to the azoreductase type 2 family. In terms of assembly, homotetramer. FMN is required as a cofactor.

Functionally, catalyzes the reductive cleavage of azo bond in aromatic azo compounds to the corresponding amines. Requires NADPH, but not NADH, as an electron donor for its activity. The polypeptide is FMN-dependent NADPH-azoreductase (azo1) (Staphylococcus haemolyticus (strain JCSC1435)).